A 393-amino-acid polypeptide reads, in one-letter code: Na(+)/H(+) antiporter NhaA (393 aa).

Helical transmembrane passes span 23–43 (AGGI…NSPF), 58–78 (LSLA…LVGL), 96–116 (MLPG…FAVL), 126–146 (GWAV…SLLG), 155–175 (VFLA…IAIF), 178–198 (AEIS…LFVM), 201–221 (MGVV…FFVF), 224–244 (GVHA…KPAP), 265–285 (VAFI…FKGL), 298–318 (ILLG…WLAI), 334–354 (LYGV…IGLL), and 367–387 (IGVL…LRAA).

The protein belongs to the NhaA Na(+)/H(+) (TC 2.A.33) antiporter family.

The protein resides in the cell inner membrane. It carries out the reaction Na(+)(in) + 2 H(+)(out) = Na(+)(out) + 2 H(+)(in). Na(+)/H(+) antiporter that extrudes sodium in exchange for external protons. The protein is Na(+)/H(+) antiporter NhaA of Brucella canis (strain ATCC 23365 / NCTC 10854 / RM-666).